The primary structure comprises 253 residues: Putative cysteine-rich repeat secretory protein 33 (253 aa).

A signal peptide spans 1–28 (MFSSYSLCKCLVSFHILAIQVLISCASS). Gnk2-homologous domains follow at residues 34–133 (EYLN…MIND) and 141–250 (YDNI…LYPF).

This sequence belongs to the cysteine-rich repeat secretory protein family.

Its subcellular location is the secreted. This Arabidopsis thaliana (Mouse-ear cress) protein is Putative cysteine-rich repeat secretory protein 33 (CRRSP33).